Here is a 437-residue protein sequence, read N- to C-terminus: Dolichyl-diphosphooligosaccharide--protein glycosyltransferase subunit wbp1 (437 aa).

The signal sequence occupies residues methionine 1–alanine 19. The Lumenal segment spans residues alanine 20–proline 401. Residues asparagine 275 and asparagine 289 are each glycosylated (N-linked (GlcNAc...) asparagine). The chain crosses the membrane as a helical span at residues tyrosine 402–leucine 422. The Cytoplasmic segment spans residues glutamine 423–asparagine 437.

This sequence belongs to the DDOST 48 kDa subunit family. In terms of assembly, component of the oligosaccharyltransferase (OST) complex.

The protein localises to the endoplasmic reticulum. Its subcellular location is the membrane. It functions in the pathway protein modification; protein glycosylation. Functionally, subunit of the oligosaccharyl transferase (OST) complex that catalyzes the initial transfer of a defined glycan (Glc(3)Man(9)GlcNAc(2) in eukaryotes) from the lipid carrier dolichol-pyrophosphate to an asparagine residue within an Asn-X-Ser/Thr consensus motif in nascent polypeptide chains, the first step in protein N-glycosylation. N-glycosylation occurs cotranslationally and the complex associates with the Sec61 complex at the channel-forming translocon complex that mediates protein translocation across the endoplasmic reticulum (ER). All subunits are required for a maximal enzyme activity. The protein is Dolichyl-diphosphooligosaccharide--protein glycosyltransferase subunit wbp1 (wbp1) of Schizosaccharomyces pombe (strain 972 / ATCC 24843) (Fission yeast).